The chain runs to 396 residues: Metacaspase-1 (396 aa).

Positions methionine 1 to glutamine 20 are enriched in gly residues. Residues methionine 1–glycine 86 form a disordered region. Low complexity predominate over residues histidine 47–glutamine 62. Residues glutamine 72–glutamine 81 show a composition bias toward polar residues. Active-site residues include histidine 186 and cysteine 242.

The protein belongs to the peptidase C14B family.

Its function is as follows. Involved in cell death (apoptosis). The protein is Metacaspase-1 (MCA1) of Pyricularia oryzae (strain 70-15 / ATCC MYA-4617 / FGSC 8958) (Rice blast fungus).